Consider the following 1055-residue polypeptide: Ephrin type-B receptor 2 (1055 aa).

An N-terminal signal peptide occupies residues 1 to 18; the sequence is MALRRLGAALLLLPLLAA. At 19-543 the chain is on the extracellular side; it reads VEETLMDSTT…QTSIQEKLPL (525 aa). An Eph LBD domain is found at 20–202; it reads EETLMDSTTA…FYRKCPRIIQ (183 aa). Disulfide bonds link Cys-62–Cys-184 and Cys-97–Cys-107. 4 N-linked (GlcNAc...) asparagine glycosylation sites follow: Asn-265, Asn-336, Asn-428, and Asn-482. Fibronectin type-III domains lie at 324-434 and 435-530; these read IPSA…TNQA and APSA…TMTE. The chain crosses the membrane as a helical span at residues 544–564; it reads IIGSSAAGLVFLIAVVVIAIV. Topologically, residues 565 to 1055 are cytoplasmic; sequence CNRRGFERAD…KESNDCSCGG (491 aa). One can recognise a Protein kinase domain in the interval 621-884; it reads VKIEQVIGAG…QIVNTLDKMI (264 aa). Residues 627–635 and Lys-653 each bind ATP; that span reads IGAGEFGEV. Asp-746 acts as the Proton acceptor in catalysis. Lys-891 participates in a covalent cross-link: Glycyl lysine isopeptide (Lys-Gly) (interchain with G-Cter in ubiquitin). The region spanning 913–977 is the SAM domain; the sequence is TSFNTVDEWL…LNSIQVMRAQ (65 aa). Phosphoserine is present on residues Ser-983 and Val-984. The PDZ-binding (in isoform 2) signature appears at 984–986; that stretch reads VEG. A disordered region spans residues 990 to 1055; the sequence is ARRPRATGRT…KESNDCSCGG (66 aa). The span at 991–1002 shows a compositional bias: basic residues; the sequence is RRPRATGRTKRC. The segment covering 1025-1049 has biased composition (basic and acidic residues); it reads KKTDPGRGREIQGIFFKEDSHKESN.

It belongs to the protein kinase superfamily. Tyr protein kinase family. Ephrin receptor subfamily. As to quaternary structure, heterotetramer upon binding of the ligand. The heterotetramer is composed of an ephrin dimer and a receptor dimer. Interacts (via PDZ-binding motif) with GRIP1 and PICK1 (via PDZ domain). Interacts with ARHGEF15; mediates ARHGEF15 phosphorylation, ubiquitination and degradation by the proteasome. Interacts with AQP1; involved in endolymph production in the inner ear. Interacts with SPSB1 and SPSB4. The phosphorylated form interacts with RASA1 (via SH2 domain 1). Interacts with EFNA5. Interacts with SH2D3C. Autophosphorylated; ligand binding stimulates autophosphorylation on tyrosine residues. Post-translationally, polyubiquitinated; ligand binding stimulates ubiquitination. Ubiquitinated by RNF186 at Lys-891, mainly through 'Lys-27'-linked polyubiquitin chains. Ubiquitinated by CRL2(KLHDC2) E3 ligase complex. In terms of processing, ligand binding induces cleavage by matrix metalloproteinases (MMPs) such as MMP7/MMP9, producing an EphB2/N-terminal fragment (NTF) and a C-terminal long fragment (EphB2-LF). EphB2-LF is further cleaved by MMPs, producing EphB2/CTF1 which is further cleaved by the PS1/gamma-secretase producing EphB2/CTF2. As to expression, brain, heart, lung, kidney, placenta, pancreas, liver and skeletal muscle. Preferentially expressed in fetal brain.

The protein localises to the cell membrane. It localises to the cell projection. Its subcellular location is the axon. The protein resides in the dendrite. It catalyses the reaction L-tyrosyl-[protein] + ATP = O-phospho-L-tyrosyl-[protein] + ADP + H(+). Functionally, receptor tyrosine kinase which binds promiscuously transmembrane ephrin-B family ligands residing on adjacent cells, leading to contact-dependent bidirectional signaling into neighboring cells. The signaling pathway downstream of the receptor is referred to as forward signaling while the signaling pathway downstream of the ephrin ligand is referred to as reverse signaling. Functions in axon guidance during development. Involved in the guidance of commissural axons, that form a major interhemispheric connection between the 2 temporal lobes of the cerebral cortex. Also involved in guidance of contralateral inner ear efferent growth cones at the midline and of retinal ganglion cell axons to the optic disk. In addition to axon guidance, also regulates dendritic spines development and maturation and stimulates the formation of excitatory synapses. Upon activation by EFNB1, abolishes the ARHGEF15-mediated negative regulation on excitatory synapse formation. Controls other aspects of development including angiogenesis, palate development and in inner ear development through regulation of endolymph production. Forward and reverse signaling through the EFNB2/EPHB2 complex regulate movement and adhesion of cells that tubularize the urethra and septate the cloaca. May function as a tumor suppressor. May be involved in the regulation of platelet activation and blood coagulation. This Homo sapiens (Human) protein is Ephrin type-B receptor 2 (EPHB2).